We begin with the raw amino-acid sequence, 401 residues long: Probable acid ceramidase (401 aa).

The N-terminal stretch at 1 to 22 (MKPVAISLSLLLLVTLLPGSEQ) is a signal peptide. Asn101, Asn303, and Asn371 each carry an N-linked (GlcNAc...) asparagine glycan.

The protein belongs to the acid ceramidase family.

It catalyses the reaction an N-acyl-sphingoid base + H2O = a sphingoid base + a fatty acid. The catalysed reaction is an N-acylsphing-4-enine + H2O = sphing-4-enine + a fatty acid. The enzyme catalyses an N-acyl-15-methylhexadecasphing-4-enine + H2O = 15-methylhexadecasphing-4-enine + a fatty acid. Catalyzes the hydrolysis of ceramides into sphingoid base and free fatty acid. C.elegans contain specific sphingoid bases, which are unique or different in structure compared to the sphingoid bases found in other animals. Two examples of these distinctive compounds are: 15-methylhexadecasphinganine and 15-methylhexadecasphing-4-enine. This Caenorhabditis elegans protein is Probable acid ceramidase.